The following is a 79-amino-acid chain: Conotoxin Tr6.3 (79 aa).

The first 22 residues, 1 to 22 (MKLTCVLIISVLFLTASQLITA), serve as a signal peptide directing secretion. Residues 23–47 (VYSRDKQQYRAARLRDEMRNLKGAR) constitute a propeptide that is removed on maturation. 3 disulfide bridges follow: cysteine 49/cysteine 62, cysteine 56/cysteine 67, and cysteine 61/cysteine 77. 4-hydroxyproline occurs at positions 60 and 63.

It belongs to the conotoxin O1 superfamily. In terms of tissue distribution, expressed by the venom duct.

It is found in the secreted. Functionally, ion channel inhibitor that inhibits the increase in intracellular calcium upon depolarization in DRG neurons. In vivo, both intraperitoneal and intracranial injections into mice induce hyperactivity. The chain is Conotoxin Tr6.3 from Conus terebra (Sea snail).